The sequence spans 275 residues: Chemotaxis protein methyltransferase 1 (275 aa).

The region spanning 1–275 (MTAITISDQE…CNPGIIYKLK (275 aa)) is the CheR-type methyltransferase domain. S-adenosyl-L-methionine-binding positions include Asn76, Thr78, Arg82, Glu117, Asp145, 201-202 (NL), and 218-219 (RN).

The catalysed reaction is L-glutamyl-[protein] + S-adenosyl-L-methionine = [protein]-L-glutamate 5-O-methyl ester + S-adenosyl-L-homocysteine. In terms of biological role, methylation of the membrane-bound methyl-accepting chemotaxis proteins (MCP) to form gamma-glutamyl methyl ester residues in MCP. The chain is Chemotaxis protein methyltransferase 1 (cheR1) from Vibrio cholerae serotype O1 (strain ATCC 39315 / El Tor Inaba N16961).